The following is a 223-amino-acid chain: Probable 3-beta-hydroxysteroid-Delta(8),Delta(7)-isomerase (223 aa).

4 helical membrane passes run 28–48 (IVSI…LLFG), 58–78 (LMCW…YFVF), 115–135 (VEGI…YAIA), and 175–195 (FYYY…PSLI). The EXPERA domain occupies 54-196 (LDKLLMCWWT…WWVLIPSLIS (143 aa)).

It belongs to the EBP family.

Its subcellular location is the endoplasmic reticulum membrane. It catalyses the reaction lathosterol = 5alpha-cholest-8-en-3beta-ol. It participates in steroid biosynthesis; sterol biosynthesis. In terms of biological role, catalyzes the conversion of Delta(8)-sterols to their corresponding Delta(7)-isomers. The polypeptide is Probable 3-beta-hydroxysteroid-Delta(8),Delta(7)-isomerase (Arabidopsis thaliana (Mouse-ear cress)).